Reading from the N-terminus, the 396-residue chain is Tryptophan synthase beta chain (396 aa).

At Lys-88 the chain carries N6-(pyridoxal phosphate)lysine.

Belongs to the TrpB family. As to quaternary structure, tetramer of two alpha and two beta chains. Pyridoxal 5'-phosphate is required as a cofactor.

It carries out the reaction (1S,2R)-1-C-(indol-3-yl)glycerol 3-phosphate + L-serine = D-glyceraldehyde 3-phosphate + L-tryptophan + H2O. The protein operates within amino-acid biosynthesis; L-tryptophan biosynthesis; L-tryptophan from chorismate: step 5/5. The beta subunit is responsible for the synthesis of L-tryptophan from indole and L-serine. This Actinobacillus pleuropneumoniae serotype 3 (strain JL03) protein is Tryptophan synthase beta chain.